Here is a 151-residue protein sequence, read N- to C-terminus: CD-NTase-associated protein 19 (151 aa).

Helical transmembrane passes span 25-45 (TVFNFYIAITGLLAAGIGVTL), 52-72 (VLFTSLMGVFVAFISFIFWKL), and 127-147 (ISFVIVGFTGILLAITPFLMK).

This sequence belongs to the Cap19 family.

The protein resides in the cell inner membrane. Functionally, membrane protein component of a CBASS (cyclic oligonucleotide-based antiphage signaling system) which provides immunity against bacteriophage. The CD-NTase protein synthesizes cyclic nucleotides in response to infection; these serve as specific second messenger signals. The signals activate a diverse range of effectors, leading to bacterial cell death and thus abortive phage infection. A type III CBASS system. Expression of this CBASS system (Cap17-CapW-CdnC-Cap7-Cap6-Cap18-Cap19) in a susceptible E.coli (strain JP313) confers resistance to bacteriophage lambda cI-. This Escherichia coli protein is CD-NTase-associated protein 19.